A 475-amino-acid polypeptide reads, in one-letter code: BTB/POZ domain-containing protein 10 (475 aa).

Positions 1–143 (MAGRPHPYDG…SSQSSSDGSC (143 aa)) are disordered. Over residues 22–31 (LHSRPRKLYK) the composition is skewed to basic residues. Positions 57 to 80 (GHERSRDRRRSSDRSRDSSHERTE) are enriched in basic and acidic residues. Over residues 81-94 (SQLTPCIRNVTSPT) the composition is skewed to polar residues. A compositionally biased stretch (basic and acidic residues) spans 97-107 (HHVEREKDHSS). Over residues 108-142 (SRPSSPRPQKASPNGSISSAGNSSRNSSQSSSDGS) the composition is skewed to low complexity. The interval 146–475 (AGEMVFVYEN…LDPDAQNPTL (330 aa)) is interaction with AKT family members. The BTB domain occupies 167-241 (ERVTLIVDNT…YKTGIIRCPD (75 aa)). A disordered region spans residues 456 to 475 (PIHPPSGNSDLDPDAQNPTL).

Interacts (via C-terminal 330-amino-acid region) with AKT1; AKT2 and AKT3. Interacts with PPP2CA and PPP1CA.

The protein resides in the nucleus. The protein localises to the cytoplasm. In terms of biological role, plays a major role as an activator of AKT family members by inhibiting PPP2CA-mediated dephosphorylation, thereby keeping AKTs activated. Plays a role in preventing motor neuronal death and in accelerating the growth of pancreatic beta cells. This is BTB/POZ domain-containing protein 10 (BTBD10) from Pongo abelii (Sumatran orangutan).